Consider the following 426-residue polypeptide: 3-phosphoshikimate 1-carboxyvinyltransferase (426 aa).

3 residues coordinate 3-phosphoshikimate: lysine 22, serine 23, and arginine 27. Lysine 22 is a binding site for phosphoenolpyruvate. 2 residues coordinate phosphoenolpyruvate: glycine 96 and arginine 124. Residues serine 170, serine 171, glutamine 172, serine 198, aspartate 314, asparagine 337, and lysine 341 each contribute to the 3-phosphoshikimate site. Glutamine 172 is a phosphoenolpyruvate binding site. Aspartate 314 acts as the Proton acceptor in catalysis. Positions 345, 387, and 412 each coordinate phosphoenolpyruvate.

This sequence belongs to the EPSP synthase family. As to quaternary structure, monomer.

The protein localises to the cytoplasm. The enzyme catalyses 3-phosphoshikimate + phosphoenolpyruvate = 5-O-(1-carboxyvinyl)-3-phosphoshikimate + phosphate. It functions in the pathway metabolic intermediate biosynthesis; chorismate biosynthesis; chorismate from D-erythrose 4-phosphate and phosphoenolpyruvate: step 6/7. In terms of biological role, catalyzes the transfer of the enolpyruvyl moiety of phosphoenolpyruvate (PEP) to the 5-hydroxyl of shikimate-3-phosphate (S3P) to produce enolpyruvyl shikimate-3-phosphate and inorganic phosphate. This is 3-phosphoshikimate 1-carboxyvinyltransferase from Shewanella baltica (strain OS185).